The primary structure comprises 182 residues: NADH-quinone oxidoreductase subunit B (182 aa).

[4Fe-4S] cluster-binding residues include C61, C62, C126, and C156.

This sequence belongs to the complex I 20 kDa subunit family. NDH-1 is composed of 14 different subunits. Subunits NuoB, C, D, E, F, and G constitute the peripheral sector of the complex. [4Fe-4S] cluster is required as a cofactor.

The protein localises to the cell inner membrane. It catalyses the reaction a quinone + NADH + 5 H(+)(in) = a quinol + NAD(+) + 4 H(+)(out). Functionally, NDH-1 shuttles electrons from NADH, via FMN and iron-sulfur (Fe-S) centers, to quinones in the respiratory chain. The immediate electron acceptor for the enzyme in this species is believed to be ubiquinone. Couples the redox reaction to proton translocation (for every two electrons transferred, four hydrogen ions are translocated across the cytoplasmic membrane), and thus conserves the redox energy in a proton gradient. The chain is NADH-quinone oxidoreductase subunit B from Xanthomonas oryzae pv. oryzae (strain PXO99A).